A 430-amino-acid polypeptide reads, in one-letter code: Serine hydroxymethyltransferase (430 aa).

Residue 120-122 coordinates (6S)-5,6,7,8-tetrahydrofolate; it reads GHI. At lysine 226 the chain carries N6-(pyridoxal phosphate)lysine.

This sequence belongs to the SHMT family. In terms of assembly, homodimer. Pyridoxal 5'-phosphate serves as cofactor.

It is found in the cytoplasm. It participates in amino-acid biosynthesis; glycine biosynthesis; glycine from L-serine: step 1/1. Functionally, catalyzes the reversible interconversion of serine and glycine with a modified folate serving as the one-carbon carrier. Also exhibits a pteridine-independent aldolase activity toward beta-hydroxyamino acids, producing glycine and aldehydes, via a retro-aldol mechanism. This chain is Serine hydroxymethyltransferase, found in Pyrobaculum aerophilum (strain ATCC 51768 / DSM 7523 / JCM 9630 / CIP 104966 / NBRC 100827 / IM2).